Here is a 37-residue protein sequence, read N- to C-terminus: Cytochrome b6-f complex subunit 5 (37 aa).

Residues L5–A25 traverse the membrane as a helical segment.

It belongs to the PetG family. The 4 large subunits of the cytochrome b6-f complex are cytochrome b6, subunit IV (17 kDa polypeptide, PetD), cytochrome f and the Rieske protein, while the 4 small subunits are PetG, PetL, PetM and PetN. The complex functions as a dimer.

The protein localises to the plastid. It is found in the chloroplast thylakoid membrane. In terms of biological role, component of the cytochrome b6-f complex, which mediates electron transfer between photosystem II (PSII) and photosystem I (PSI), cyclic electron flow around PSI, and state transitions. PetG is required for either the stability or assembly of the cytochrome b6-f complex. The polypeptide is Cytochrome b6-f complex subunit 5 (Phaeodactylum tricornutum (strain CCAP 1055/1)).